Here is a 149-residue protein sequence, read N- to C-terminus: Large-conductance mechanosensitive channel (149 aa).

3 consecutive transmembrane segments (helical) span residues 10-30 (FALK…GAFA), 41-61 (IMPI…MFLI), and 87-107 (GSFI…FMMV).

This sequence belongs to the MscL family. As to quaternary structure, homopentamer.

It localises to the cell inner membrane. Its function is as follows. Channel that opens in response to stretch forces in the membrane lipid bilayer. May participate in the regulation of osmotic pressure changes within the cell. The sequence is that of Large-conductance mechanosensitive channel from Psychrobacter cryohalolentis (strain ATCC BAA-1226 / DSM 17306 / VKM B-2378 / K5).